We begin with the raw amino-acid sequence, 151 residues long: Nucleoside diphosphate kinase (151 aa).

Residues K11, F59, R87, T93, R104, and N114 each contribute to the ATP site. H117 functions as the Pros-phosphohistidine intermediate in the catalytic mechanism.

This sequence belongs to the NDK family. Homohexamer. Mg(2+) is required as a cofactor.

It carries out the reaction a 2'-deoxyribonucleoside 5'-diphosphate + ATP = a 2'-deoxyribonucleoside 5'-triphosphate + ADP. The enzyme catalyses a ribonucleoside 5'-diphosphate + ATP = a ribonucleoside 5'-triphosphate + ADP. Major role in the synthesis of nucleoside triphosphates other than ATP. The ATP gamma phosphate is transferred to the NDP beta phosphate via a ping-pong mechanism, using a phosphorylated active-site intermediate. The protein is Nucleoside diphosphate kinase of Ginglymostoma cirratum (Nurse shark).